We begin with the raw amino-acid sequence, 47 residues long: Lysis protein for colicins E2 and E3 (47 aa).

Residues 1–19 form the signal peptide; it reads MKKITGIILLLLAVIILSA. Cys-20 carries the N-palmitoyl cysteine lipid modification. Cys-20 carries the S-diacylglycerol cysteine lipid modification.

The protein resides in the cell outer membrane. Functionally, lysis proteins are required for both colicin release and partial cell lysis. This chain is Lysis protein for colicins E2 and E3 (hic), found in Escherichia coli.